The chain runs to 597 residues: Vacuolar protein sorting-associated protein 33A (597 aa).

It belongs to the STXBP/unc-18/SEC1 family. Core component of at least two putative endosomal tethering complexes, the homotypic fusion and vacuole protein sorting (HOPS) complex and the class C core vacuole/endosome tethering (CORVET) complex. Their common core is composed of the class C Vps proteins VPS11, VPS16, VPS18 and VPS33A, which in HOPS further associates with VPS39 and VPS41 and in CORVET with VPS8 and TGFBRAP1. Interacts with RAB5C, UVRAG, STX17, MON1A and MON1B. Associates with adaptor protein complex 3 (AP-3) and clathrin. Interacts with PLEKHM1. Ubiquitous.

The protein localises to the cytoplasmic vesicle. It is found in the late endosome membrane. It localises to the lysosome membrane. The protein resides in the early endosome. Its subcellular location is the autophagosome. The protein localises to the clathrin-coated vesicle. In terms of biological role, plays a role in vesicle-mediated protein trafficking to lysosomal compartments including the endocytic membrane transport and autophagic pathways. Believed to act as a core component of the putative HOPS and CORVET endosomal tethering complexes which are proposed to be involved in the Rab5-to-Rab7 endosome conversion probably implicating MON1A/B, and via binding SNAREs and SNARE complexes to mediate tethering and docking events during SNARE-mediated membrane fusion. The HOPS complex is proposed to be recruited to Rab7 on the late endosomal membrane and to regulate late endocytic, phagocytic and autophagic traffic towards lysosomes. The CORVET complex is proposed to function as a Rab5 effector to mediate early endosome fusion probably in specific endosome subpopulations. Required for fusion of endosomes and autophagosomes with lysosomes; the function is dependent on its association with VPS16 but not VIPAS39. The function in autophagosome-lysosome fusion implicates STX17 but not UVRAG. The protein is Vacuolar protein sorting-associated protein 33A (Vps33a) of Rattus norvegicus (Rat).